Consider the following 560-residue polypeptide: Nucleoprotein (560 aa).

Residues 54 to 236 are binding site for the cap structure m7GTP; it reads LRKSKRGDTD…ITKDESALNI (183 aa). Residues D380 and E382 each coordinate Mn(2+). E390, C497, H500, and C521 together coordinate Zn(2+). D525 provides a ligand contact to Mn(2+).

The protein belongs to the arenaviridae nucleocapsid protein family. In terms of assembly, homomultimerizes to form the nucleocapsid. Binds to viral genomic RNA. Interacts with glycoprotein G2. Interacts with protein Z; this interaction probably directs the encapsidated genome to budding sites. Interacts with protein L; this interaction does not interfere with Z-L interaction. Interacts with host IKBKE (via Protein kinase domain); the interaction inhibits IKBKE kinase activity.

The protein localises to the virion. It is found in the host cytoplasm. Its function is as follows. Encapsidates the genome, protecting it from nucleases. The encapsidated genomic RNA is termed the nucleocapsid (NC). Serves as template for viral transcription and replication. The increased presence of protein N in host cell does not seem to trigger the switch from transcription to replication as observed in other negative strain RNA viruses. Through the interaction with host IKBKE, strongly inhibits the phosphorylation and nuclear translocation of host IRF3, a protein involved in interferon activation pathway, leading to the inhibition of interferon-beta and IRF3-dependent promoters activation. Also encodes a functional 3'-5' exoribonuclease that degrades preferentially dsRNA substrates and thereby participates in the suppression of interferon induction. This is Nucleoprotein from Homo sapiens (Human).